Here is a 318-residue protein sequence, read N- to C-terminus: Putative 2-hydroxyacid dehydrogenase SSP0606 (318 aa).

Residues 156–157 (EI), 235–237 (ASR), and Asp261 contribute to the NAD(+) site. Residue Arg237 is part of the active site. Residue Glu266 is part of the active site. The active-site Proton donor is His284. 284-287 (HIGN) is an NAD(+) binding site.

The protein belongs to the D-isomer specific 2-hydroxyacid dehydrogenase family.

The protein is Putative 2-hydroxyacid dehydrogenase SSP0606 of Staphylococcus saprophyticus subsp. saprophyticus (strain ATCC 15305 / DSM 20229 / NCIMB 8711 / NCTC 7292 / S-41).